The chain runs to 396 residues: Elongation factor Tu (396 aa).

Residues 10–206 enclose the tr-type G domain; it reads KPHCNIGTIG…QVDAYIPQPE (197 aa). The G1 stretch occupies residues 19-26; sequence GHVDHGKT. 19–26 contacts GTP; it reads GHVDHGKT. Position 26 (Thr26) interacts with Mg(2+). The tract at residues 60-64 is G2; that stretch reads GITIS. The interval 81–84 is G3; the sequence is DCPG. GTP contacts are provided by residues 81-85 and 136-139; these read DCPGH and NKCD. The tract at residues 136–139 is G4; it reads NKCD. Positions 174–176 are G5; it reads SAL.

This sequence belongs to the TRAFAC class translation factor GTPase superfamily. Classic translation factor GTPase family. EF-Tu/EF-1A subfamily. As to quaternary structure, monomer.

The protein localises to the cytoplasm. It catalyses the reaction GTP + H2O = GDP + phosphate + H(+). Its function is as follows. GTP hydrolase that promotes the GTP-dependent binding of aminoacyl-tRNA to the A-site of ribosomes during protein biosynthesis. This Rhodopseudomonas palustris (strain ATCC BAA-98 / CGA009) protein is Elongation factor Tu.